Consider the following 320-residue polypeptide: Endochitinase (320 aa).

Residues 1–23 (MKRTLKVSFFILCLLPLFLGSKA) form the signal peptide. A Chitin-binding type-1 domain is found at 24-64 (EQCGSQAGGAVCPNGLCCSKFGFCGSTDPYCGDGCQSQCKS). Disulfide bonds link cysteine 26-cysteine 41, cysteine 35-cysteine 47, cysteine 40-cysteine 54, cysteine 58-cysteine 62, cysteine 101-cysteine 163, cysteine 175-cysteine 182, and cysteine 281-cysteine 313. Residue glutamate 145 is the Proton donor of the active site.

The protein belongs to the glycosyl hydrolase 19 family. Chitinase class I subfamily.

It catalyses the reaction Random endo-hydrolysis of N-acetyl-beta-D-glucosaminide (1-&gt;4)-beta-linkages in chitin and chitodextrins.. Defense against chitin-containing fungal pathogens. The chain is Endochitinase from Pisum sativum (Garden pea).